Consider the following 188-residue polypeptide: Elongation factor P (188 aa).

It belongs to the elongation factor P family.

The protein localises to the cytoplasm. It functions in the pathway protein biosynthesis; polypeptide chain elongation. Functionally, involved in peptide bond synthesis. Stimulates efficient translation and peptide-bond synthesis on native or reconstituted 70S ribosomes in vitro. Probably functions indirectly by altering the affinity of the ribosome for aminoacyl-tRNA, thus increasing their reactivity as acceptors for peptidyl transferase. The polypeptide is Elongation factor P (Anaplasma marginale (strain St. Maries)).